The chain runs to 454 residues: Bifunctional protein GlmU (454 aa).

A pyrophosphorylase region spans residues 1–226; it reads MSLNVVILAA…AIEVEGANNR (226 aa). Residues 8-11, lysine 22, glutamine 73, 78-79, 100-102, glycine 137, glutamate 151, asparagine 166, and asparagine 224 each bind UDP-N-acetyl-alpha-D-glucosamine; these read LAAG, GT, and YGD. Residue aspartate 102 coordinates Mg(2+). Asparagine 224 contacts Mg(2+). The linker stretch occupies residues 227 to 247; the sequence is VQLAQLERAYQARAAEKMMLE. Positions 248–454 are N-acetyltransferase; sequence GANLRDPARI…GWQRPIKIKK (207 aa). 2 residues coordinate UDP-N-acetyl-alpha-D-glucosamine: arginine 330 and lysine 348. Histidine 360 functions as the Proton acceptor in the catalytic mechanism. Positions 363 and 374 each coordinate UDP-N-acetyl-alpha-D-glucosamine. Residues alanine 377, 383–384, serine 402, alanine 420, and arginine 437 contribute to the acetyl-CoA site; that span reads NY.

It in the N-terminal section; belongs to the N-acetylglucosamine-1-phosphate uridyltransferase family. The protein in the C-terminal section; belongs to the transferase hexapeptide repeat family. Homotrimer. Mg(2+) is required as a cofactor.

It is found in the cytoplasm. It carries out the reaction alpha-D-glucosamine 1-phosphate + acetyl-CoA = N-acetyl-alpha-D-glucosamine 1-phosphate + CoA + H(+). The enzyme catalyses N-acetyl-alpha-D-glucosamine 1-phosphate + UTP + H(+) = UDP-N-acetyl-alpha-D-glucosamine + diphosphate. Its pathway is nucleotide-sugar biosynthesis; UDP-N-acetyl-alpha-D-glucosamine biosynthesis; N-acetyl-alpha-D-glucosamine 1-phosphate from alpha-D-glucosamine 6-phosphate (route II): step 2/2. The protein operates within nucleotide-sugar biosynthesis; UDP-N-acetyl-alpha-D-glucosamine biosynthesis; UDP-N-acetyl-alpha-D-glucosamine from N-acetyl-alpha-D-glucosamine 1-phosphate: step 1/1. It functions in the pathway bacterial outer membrane biogenesis; LPS lipid A biosynthesis. Functionally, catalyzes the last two sequential reactions in the de novo biosynthetic pathway for UDP-N-acetylglucosamine (UDP-GlcNAc). The C-terminal domain catalyzes the transfer of acetyl group from acetyl coenzyme A to glucosamine-1-phosphate (GlcN-1-P) to produce N-acetylglucosamine-1-phosphate (GlcNAc-1-P), which is converted into UDP-GlcNAc by the transfer of uridine 5-monophosphate (from uridine 5-triphosphate), a reaction catalyzed by the N-terminal domain. This chain is Bifunctional protein GlmU, found in Shewanella frigidimarina (strain NCIMB 400).